The sequence spans 332 residues: MKVTFEQLKAAFNRVLISRGVDSETADACAEMFARTTESGVYSHGVNRFPRFIQQLENGDIIPDAQPKRITSLGAIEQWDAQRSIGNLTAKKMMDRAIELAADHGIGLVALRNANHWMRGGSYGWQAAEKGYIGICWTNSIAVMPPWGAKECRIGTNPLIVAIPSTPITMVDMSMSMFSYGMLEVNRLAGRQLPVDGGFDDEGNLTKEPGVIEKNRRILPMGYWKGSGMSIVLDMIATLLSDGASVAEVTQDNSDEYGISQIFIAIEVDKLIDGPTRDAKLQRIMDYVTSAERADENQAIRLPGHEFTTLLAENRRNGITVDDSVWAKIQAL.

The active-site Proton donor is His-44. NAD(+) contacts are provided by residues 168–174 (ITMVDMS), 224–225 (WK), and 304–306 (GHE).

Belongs to the LDH2/MDH2 oxidoreductase family. DlgD subfamily. Homodimer.

It localises to the cytoplasm. The catalysed reaction is 3-dehydro-L-gulonate + NAD(+) = 2,3-dioxo-L-gulonate + NADH + H(+). It catalyses the reaction 3-dehydro-L-gulonate + NADP(+) = 2,3-dioxo-L-gulonate + NADPH + H(+). In terms of biological role, catalyzes the reduction of 2,3-diketo-L-gulonate in the presence of NADH, to form 3-keto-L-gulonate. This is 2,3-diketo-L-gulonate reductase from Escherichia coli (strain K12 / MC4100 / BW2952).